The following is a 175-amino-acid chain: Disulfide bond formation protein B 2 (175 aa).

Residues M1–L9 are Cytoplasmic-facing. Residues F10–Y26 form a helical membrane-spanning segment. Residues L27–A44 lie on the Periplasmic side of the membrane. A disulfide bridge connects residues C36 and C39. The chain crosses the membrane as a helical span at residues A45–P61. The Cytoplasmic segment spans residues G62–R68. A helical transmembrane segment spans residues Y69–G85. At T86 to E142 the chain is on the periplasmic side. A helical transmembrane segment spans residues W143–S161. At E162–Y175 the chain is on the cytoplasmic side.

This sequence belongs to the DsbB family.

The protein localises to the cell inner membrane. In terms of biological role, required for disulfide bond formation in some periplasmic proteins. Acts by oxidizing the DsbA protein. In Pseudomonas syringae pv. syringae (strain B728a), this protein is Disulfide bond formation protein B 2.